Here is a 296-residue protein sequence, read N- to C-terminus: Urease accessory protein UreD (296 aa).

Belongs to the UreD family. UreD, UreF and UreG form a complex that acts as a GTP-hydrolysis-dependent molecular chaperone, activating the urease apoprotein by helping to assemble the nickel containing metallocenter of UreC. The UreE protein probably delivers the nickel.

It localises to the cytoplasm. Its function is as follows. Required for maturation of urease via the functional incorporation of the urease nickel metallocenter. The protein is Urease accessory protein UreD of Methylibium petroleiphilum (strain ATCC BAA-1232 / LMG 22953 / PM1).